We begin with the raw amino-acid sequence, 44 residues long: DVCDSLVGGHCIHNGCWCDQDAPHGNCCDTGGCVWWWCPGTKWD.

Intrachain disulfides connect cysteine 3–cysteine 16, cysteine 11–cysteine 28, cysteine 18–cysteine 33, and cysteine 27–cysteine 38. Tryptophan 17 carries the post-translational modification 6'-bromotryptophan. Residue proline 23 is modified to 4-hydroxyproline. Tryptophan 36 and tryptophan 37 each carry 6'-bromotryptophan. Residue proline 39 is modified to 4-hydroxyproline. Tryptophan 43 carries the post-translational modification 6'-bromotryptophan.

As to expression, expressed by the venom duct.

It is found in the secreted. Its function is as follows. Mu-conotoxins block voltage-gated sodium channels. This toxin reversibly blocks voltage-gated sodium channel in cephalopods, with no alteration in the voltage dependence of sodium conductance or on the kinetics of inactivation. This Californiconus californicus (California cone) protein is Mu-conotoxin-like Cal 12.1.1e.